The following is a 427-amino-acid chain: Gamma-glutamyl phosphate reductase (427 aa).

It belongs to the gamma-glutamyl phosphate reductase family.

Its subcellular location is the cytoplasm. The enzyme catalyses L-glutamate 5-semialdehyde + phosphate + NADP(+) = L-glutamyl 5-phosphate + NADPH + H(+). It participates in amino-acid biosynthesis; L-proline biosynthesis; L-glutamate 5-semialdehyde from L-glutamate: step 2/2. In terms of biological role, catalyzes the NADPH-dependent reduction of L-glutamate 5-phosphate into L-glutamate 5-semialdehyde and phosphate. The product spontaneously undergoes cyclization to form 1-pyrroline-5-carboxylate. The chain is Gamma-glutamyl phosphate reductase from Brucella canis (strain ATCC 23365 / NCTC 10854 / RM-666).